A 407-amino-acid chain; its full sequence is 1-deoxy-D-xylulose 5-phosphate reductoisomerase (407 aa).

The NADPH site is built by threonine 25, glycine 26, serine 27, isoleucine 28, asparagine 53, and asparagine 136. A 1-deoxy-D-xylulose 5-phosphate-binding site is contributed by lysine 137. Glutamate 138 contacts NADPH. A Mn(2+)-binding site is contributed by aspartate 162. Residues serine 163, glutamate 164, serine 188, and histidine 211 each contribute to the 1-deoxy-D-xylulose 5-phosphate site. Glutamate 164 is a Mn(2+) binding site. Residue glycine 217 participates in NADPH binding. Serine 224, asparagine 229, lysine 230, and glutamate 233 together coordinate 1-deoxy-D-xylulose 5-phosphate. Glutamate 233 is a binding site for Mn(2+).

Belongs to the DXR family. Mg(2+) serves as cofactor. Mn(2+) is required as a cofactor.

It catalyses the reaction 2-C-methyl-D-erythritol 4-phosphate + NADP(+) = 1-deoxy-D-xylulose 5-phosphate + NADPH + H(+). The protein operates within isoprenoid biosynthesis; isopentenyl diphosphate biosynthesis via DXP pathway; isopentenyl diphosphate from 1-deoxy-D-xylulose 5-phosphate: step 1/6. Catalyzes the NADPH-dependent rearrangement and reduction of 1-deoxy-D-xylulose-5-phosphate (DXP) to 2-C-methyl-D-erythritol 4-phosphate (MEP). This is 1-deoxy-D-xylulose 5-phosphate reductoisomerase from Rhodopseudomonas palustris (strain BisB18).